A 299-amino-acid polypeptide reads, in one-letter code: Acetaldehyde dehydrogenase 1 (299 aa).

C130 (acyl-thioester intermediate) is an active-site residue. Residues 161 to 169 and N272 contribute to the NAD(+) site; that span reads SVGPGTRKN.

The protein belongs to the acetaldehyde dehydrogenase family.

The enzyme catalyses acetaldehyde + NAD(+) + CoA = acetyl-CoA + NADH + H(+). This chain is Acetaldehyde dehydrogenase 1 (mhpF), found in Burkholderia cenocepacia (strain ATCC BAA-245 / DSM 16553 / LMG 16656 / NCTC 13227 / J2315 / CF5610) (Burkholderia cepacia (strain J2315)).